A 1113-amino-acid chain; its full sequence is Poly(A) RNA polymerase gld-2 (1113 aa).

Disordered regions lie at residues 1–113 (MVMA…PKYH), 134–175 (RPIF…PTQP), 205–266 (LYRS…GQDP), and 445–513 (LDDE…DEST). Residues 22 to 52 (SPSVDSVSRVQQQSGGFAFYNQQSNHQYQQS) are compositionally biased toward low complexity. The span at 60 to 106 (SRDGNTGYYNNHSGNKRQTYNNQRGGRSYNHRGNSNYQQNGEYSGNQ) shows a compositional bias: polar residues. Positions 149–172 (RRSSPPSPSALSSSTANSTSNRAP) are enriched in low complexity. Positions 223 to 233 (YKQPPPQPPST) are enriched in pro residues. Over residues 451-485 (GADHDKTIDENRRRIHKSQEPRIGTEEKALNELPR) the composition is skewed to basic and acidic residues. Residues 492–507 (SSCSSISSVSESSSPS) show a composition bias toward low complexity. 2 residues coordinate Mg(2+): aspartate 606 and aspartate 608. The PAP-associated domain occupies 780-816 (TLGELLIGFLDYYANEFNYDRDAISIRQGRRVERAAL). Disordered stretches follow at residues 817–854 (AVRPKIHSNSEGDKETPPPSSSASTSSIHNGGTPGIPM) and 966–1113 (GPGH…NVSQ). Residues 972–994 (YQQQSNQNLSRPQRPGSNQGYQM) are compositionally biased toward polar residues. Low complexity-rich tracts occupy residues 995–1035 (NNNR…SRSN) and 1044–1061 (QQNSQKGSSGVSVSKENV). Residues 1069 to 1084 (VDKKQQNSNRKDDGNR) are compositionally biased toward basic and acidic residues.

It belongs to the DNA polymerase type-B-like family. GLD2 subfamily. Interacts with gld-3. Mg(2+) serves as cofactor. Mn(2+) is required as a cofactor. In terms of tissue distribution, germline-specific.

It is found in the cytoplasm. It catalyses the reaction RNA(n) + ATP = RNA(n)-3'-adenine ribonucleotide + diphosphate. Its function is as follows. Cytoplasmic poly(A) RNA polymerase that adds successive AMP monomers to the 3'-end of specific RNAs, forming a poly(A) tail. Acts as a regulator of mitosis/meiosis required for progression through meiotic prophase during oogenesis and spermatogenesis and for promotion of the entry into meiosis from the mitotic cell cycle. May act by regulating and activating gld-1 mRNA activity in germline. Required for polyadenylation of neg-1 mRNA during embryogenesis. This Caenorhabditis elegans protein is Poly(A) RNA polymerase gld-2 (gld-2).